The primary structure comprises 202 residues: Holliday junction resolvase RecU (202 aa).

Residues threonine 85, aspartate 87, glutamate 100, and glutamine 119 each contribute to the Mg(2+) site.

Belongs to the RecU family. Requires Mg(2+) as cofactor.

The protein resides in the cytoplasm. The enzyme catalyses Endonucleolytic cleavage at a junction such as a reciprocal single-stranded crossover between two homologous DNA duplexes (Holliday junction).. Endonuclease that resolves Holliday junction intermediates in genetic recombination. Cleaves mobile four-strand junctions by introducing symmetrical nicks in paired strands. Promotes annealing of linear ssDNA with homologous dsDNA. Required for DNA repair, homologous recombination and chromosome segregation. This is Holliday junction resolvase RecU from Streptococcus pyogenes serotype M6 (strain ATCC BAA-946 / MGAS10394).